A 661-amino-acid chain; its full sequence is UvrABC system protein B (661 aa).

The Helicase ATP-binding domain maps to 25–178; the sequence is EGILKGEKFQ…DEVIRDLIRM (154 aa). 38-45 contacts ATP; that stretch reads GVTGSGKT. The short motif at 91-114 is the Beta-hairpin element; that stretch reads YYDYYQPEAYIPETDTYIEKDSSI. The region spanning 429–591 is the Helicase C-terminal domain; the sequence is QIDHLIGEIR…IVPQTVRKGI (163 aa). A UVR domain is found at 625–660; sequence EEYIKELEQEMKKLAIELEFEKAAKVRDKIFELKKL.

This sequence belongs to the UvrB family. As to quaternary structure, forms a heterotetramer with UvrA during the search for lesions. Interacts with UvrC in an incision complex.

The protein resides in the cytoplasm. In terms of biological role, the UvrABC repair system catalyzes the recognition and processing of DNA lesions. A damage recognition complex composed of 2 UvrA and 2 UvrB subunits scans DNA for abnormalities. Upon binding of the UvrA(2)B(2) complex to a putative damaged site, the DNA wraps around one UvrB monomer. DNA wrap is dependent on ATP binding by UvrB and probably causes local melting of the DNA helix, facilitating insertion of UvrB beta-hairpin between the DNA strands. Then UvrB probes one DNA strand for the presence of a lesion. If a lesion is found the UvrA subunits dissociate and the UvrB-DNA preincision complex is formed. This complex is subsequently bound by UvrC and the second UvrB is released. If no lesion is found, the DNA wraps around the other UvrB subunit that will check the other stand for damage. This Caldicellulosiruptor bescii (strain ATCC BAA-1888 / DSM 6725 / KCTC 15123 / Z-1320) (Anaerocellum thermophilum) protein is UvrABC system protein B.